An 89-amino-acid chain; its full sequence is cAMP-regulated phosphoprotein 21 (89 aa).

Positions 1 to 89 (MSEQGDLNQA…GGESLQDQTL (89 aa)) are disordered. At serine 2 the chain carries N-acetylserine. The span at 9 to 25 (QAIAEEGGTEQETATPE) shows a compositional bias: low complexity. Residue serine 33 is modified to Phosphoserine. A compositionally biased stretch (basic and acidic residues) spans 40–53 (LELQRRLEAQNQER). Residue serine 56 is modified to Phosphoserine.

Interacts with CALM1. In terms of processing, phosphorylation at Ser-56 favors interaction with CALM1.

The protein localises to the cytoplasm. In terms of biological role, may act as a competitive inhibitor of calmodulin-dependent enzymes such as calcineurin in neurons. The sequence is that of cAMP-regulated phosphoprotein 21 (ARPP21) from Pongo abelii (Sumatran orangutan).